Reading from the N-terminus, the 720-residue chain is Iron-sulfur clusters transporter ATM1, mitochondrial (720 aa).

The transit peptide at 1–36 directs the protein to the mitochondrion; it reads MIMFRSLSVTPVWKAGLSLSHRSIPINSRLSSVRNY. The Mitochondrial matrix portion of the chain corresponds to 37 to 129; that stretch reads ISIGCANKTG…PSGDNKVKIR (93 aa). Polar residues predominate over residues 64 to 77; it reads RFNSSSNGNGTDKN. The tract at residues 64-102 is disordered; sequence RFNSSSNGNGTDKNASVAPKTEVKKIVPPKPSTNGKSKT. The chain crosses the membrane as a helical span at residues 130–151; it reads VLIALALLIGAKLLNVQVPFFF. Positions 130–421 constitute an ABC transmembrane type-1 domain; sequence VLIALALLIG…LGSVYRELKQ (292 aa). At 152–175 the chain is on the mitochondrial intermembrane side; sequence KQTIDSMNIEWGPDVATVLPVAIT. The helical transmembrane segment at 176 to 199 threads the bilayer; the sequence is MTILSYGAARFGAVMFGELRNAVF. Residues 200–248 lie on the Mitochondrial matrix side of the membrane; the sequence is AKVAQNAIRKVSLQTFQHLMKLDLGWHLSRQTGGLTRAMDRGTKGISYV. The helical transmembrane segment at 249 to 272 threads the bilayer; sequence LSAMVFHMIPITFEISVVCGILTY. Q273 is a topological domain (mitochondrial intermembrane). A helical transmembrane segment spans residues 274–294; it reads FGSSFAAMTFVTMLLYSFFTF. Residues 295-360 are Mitochondrial matrix-facing; it reads KTTAWRTEFR…SQIKVAQSLA (66 aa). Glutathione is bound by residues 300–304 and 363–366; these read RTEFR and NAGQ. The chain crosses the membrane as a helical span at residues 361-379; the sequence is FLNAGQNFIFTSALTAMMY. Residues 380-394 are Mitochondrial intermembrane-facing; sequence MGASGVMEGALTVGD. The helical transmembrane segment at 395-416 threads the bilayer; sequence LVLINQLVFQLSVPLNFLGSVY. G413 provides a ligand contact to glutathione. The Mitochondrial matrix segment spans residues 417-720; that stretch reads RELKQSLIDM…EKEPRTSKKD (304 aa). The region spanning 456–692 is the ABC transporter domain; sequence IKFENVTFGY…PNSLYSELWN (237 aa). Residues Y465 and 489–500 each bind ATP; that span reads GPSGSGKSTILR.

This sequence belongs to the ABC transporter superfamily. ABCB family. Heavy Metal importer (TC 3.A.1.210) subfamily. As to quaternary structure, homodimer.

The protein resides in the mitochondrion inner membrane. Functionally, performs an essential function in the generation of cytoplasmic iron-sulfur proteins by mediating the ATP-dependent export of Fe/S cluster precursors synthesized by NFS1 and other mitochondrial proteins. Hydrolyzes ATP. Binds glutathione and may function by transporting a glutathione-conjugated iron-sulfur compound. In Kluyveromyces lactis (strain ATCC 8585 / CBS 2359 / DSM 70799 / NBRC 1267 / NRRL Y-1140 / WM37) (Yeast), this protein is Iron-sulfur clusters transporter ATM1, mitochondrial.